The chain runs to 648 residues: Pumilio homolog 3 (648 aa).

Positions 1 to 124 are disordered; it reads MEVKGKKQFT…KKKKELKQSR (124 aa). The span at 17 to 27 shows a compositional bias: basic and acidic residues; that stretch reads AQEKNRFHKNS. K33 bears the N6-acetyllysine mark. The span at 60 to 69 shows a compositional bias: basic residues; that stretch reads LGKKGVKQFK. Residues 94 to 124 are compositionally biased toward basic and acidic residues; it reads FQPDGRSDESAAKKPKWDDFKKKKKELKQSR. The short motif at 106–118 is the Nuclear localization signal element; it reads KKPKWDDFKKKKK. Positions 143-510 constitute a PUM-HD domain; the sequence is EILRRKDCDK…VVLDKSACVL (368 aa). Pumilio repeat units follow at residues 177 to 212, 213 to 248, 249 to 277, 289 to 325, 326 to 361, 362 to 397, 398 to 435, 436 to 504, 505 to 551, 552 to 596, and 597 to 636; these read HDST…LSKA, KYSR…MLRH, AEAS…ELYG, RTLD…VIKH, SLVH…LAHT, HDGA…VANG, QYSH…IVND, KYGR…VVLD, KSAC…IAEH, PAGH…WASV, and NRGA…KSTS. Residues 289 to 297 form an HA-8 region; that stretch reads RTLDKVLEV.

As to quaternary structure, interacts with PARP1 (via catalytic domain). In terms of tissue distribution, widely expressed.

The protein localises to the nucleus. The protein resides in the nucleolus. It is found in the nucleoplasm. Its subcellular location is the chromosome. Inhibits the poly(ADP-ribosyl)ation activity of PARP1 and the degradation of PARP1 by CASP3 following genotoxic stress. Binds to double-stranded RNA or DNA without sequence specificity. Involved in development of the eye and of primordial germ cells. The polypeptide is Pumilio homolog 3 (Homo sapiens (Human)).